Here is a 292-residue protein sequence, read N- to C-terminus: (S)-phenoxypropionate/alpha-ketoglutarate-dioxygenase (292 aa).

Residues His108 and Asp110 each contribute to the Fe cation site. 2-oxoglutarate is bound by residues Thr135 and Trp247. His262 contacts Fe cation. Residue Arg273 participates in 2-oxoglutarate binding.

Belongs to the TfdA dioxygenase family. As to quaternary structure, monomer. Requires Fe cation as cofactor. It depends on L-ascorbate as a cofactor.

The catalysed reaction is (S)-2-(4-chloro-2-methylphenoxy)propanoate + 2-oxoglutarate + O2 = 2-methyl-4-chlorophenol + pyruvate + succinate + CO2. It carries out the reaction (S)-(2,4-dichlorophenoxy)propanoate + 2-oxoglutarate + O2 = 2,4-dichlorophenol + pyruvate + succinate + CO2. It functions in the pathway xenobiotic degradation; 2-(2,4-dichlorophenoxy)propanoate degradation. Its activity is regulated as follows. Inhibited by divalent cations, most significantly by copper and nickel, and by diethylpyrocarbonate (DEPC). Its function is as follows. Involved in the degradation of the phenoxypropionate herbicides. Catalyzes the enantiospecific cleavage of the ether bond in the herbicid S-dichlorprop ((S)-2-(2,4-dichlorophenoxy)propionate)(S-2,4-DP) and S-mecoprop ((S)-2-(4-chloro-2-methylphenoxy)propionate)(S-2,4-MCPP). It can also accept (RS)-2-(4-chlorophenoxy)propionate, (RS)-2-(m-chlorophenoxy)propionate and phenoxyacetate derivatives such as 2,4-dichlorophenoxyacetate (2,4-D), however it can only accept 2-oxoglutarate as oxygen acceptor. The polypeptide is (S)-phenoxypropionate/alpha-ketoglutarate-dioxygenase (Delftia acidovorans (Pseudomonas acidovorans)).